Here is a 325-residue protein sequence, read N- to C-terminus: Tyrosine phosphatase H2 (325 aa).

In terms of domain architecture, Tyrosine-protein phosphatase spans 27-295 (VTREHEKIMA…FFCYRVMERY (269 aa)). Residue Cys-236 is the Phosphocysteine intermediate of the active site.

This sequence belongs to the protein-tyrosine phosphatase family.

It localises to the host cytoplasm. It catalyses the reaction O-phospho-L-tyrosyl-[protein] + H2O = L-tyrosyl-[protein] + phosphate. Suppresses host immune cell adhesion and phagocytosis. Triggers host mitochondrial membrane depolarization and caspase-dependent apoptosis. This Microplitis demolitor bracovirus (isolate Webb) (MdBV) protein is Tyrosine phosphatase H2 (H2).